A 127-amino-acid polypeptide reads, in one-letter code: Putative defensin-like protein 180 (127 aa).

The N-terminal stretch at 1–26 (MERITSLVFFASFLIIFVSGVNQTRA) is a signal peptide. Cystine bridges form between cysteine 29-cysteine 70, cysteine 36-cysteine 55, cysteine 39-cysteine 64, cysteine 43-cysteine 66, cysteine 81-cysteine 127, cysteine 92-cysteine 112, cysteine 97-cysteine 121, and cysteine 101-cysteine 123.

Belongs to the DEFL family.

The protein localises to the secreted. The protein is Putative defensin-like protein 180 (LCR58) of Arabidopsis thaliana (Mouse-ear cress).